A 200-amino-acid polypeptide reads, in one-letter code: Cuticle protein 21.3 (200 aa).

Repeat copies occupy residues 98–101 (AAPA), 104–107 (AAPA), 116–119 (AAPA), 121–124 (AAPA), 133–136 (AAPA), 154–157 (AAPA), 166–169 (AAPA), 178–181 (AAPA), 184–187 (AAPA), and 196–199 (AAPA).

Functionally, component of the cuticle of migratory locust which contains more than 100 different structural proteins. The sequence is that of Cuticle protein 21.3 from Locusta migratoria (Migratory locust).